A 237-amino-acid polypeptide reads, in one-letter code: GrpE protein homolog, mitochondrial (237 aa).

The protein belongs to the GrpE family. Probable component of the PAM complex at least composed of a mitochondrial HSP70 protein, GrpE, tim-44, tim-16 and tim-14/dnj-21.

Its subcellular location is the mitochondrion matrix. Essential component of the PAM complex, a complex required for the translocation of transit peptide-containing proteins from the inner membrane into the mitochondrial matrix in an ATP-dependent manner. Seems to control the nucleotide-dependent binding of mitochondrial HSP70 to substrate proteins. The sequence is that of GrpE protein homolog, mitochondrial from Caenorhabditis elegans.